A 74-amino-acid chain; its full sequence is Acyl carrier protein (74 aa).

Positions 1–73 (MAVFEKVQEI…DLVAYVEEQA (73 aa)) constitute a Carrier domain. The residue at position 35 (Ser35) is an O-(pantetheine 4'-phosphoryl)serine.

The protein belongs to the acyl carrier protein (ACP) family. In terms of processing, 4'-phosphopantetheine is transferred from CoA to a specific serine of apo-ACP by AcpS. This modification is essential for activity because fatty acids are bound in thioester linkage to the sulfhydryl of the prosthetic group.

It is found in the cytoplasm. The protein operates within lipid metabolism; fatty acid biosynthesis. Functionally, carrier of the growing fatty acid chain in fatty acid biosynthesis. This Streptococcus pneumoniae serotype 4 (strain ATCC BAA-334 / TIGR4) protein is Acyl carrier protein.